The sequence spans 973 residues: ATP-dependent DNA helicase Q5 (973 aa).

Residues 39-213 form the Helicase ATP-binding domain; that stretch reads MAVVKGDKDV…FAALHLKQPV (175 aa). 52 to 59 lines the ATP pocket; sequence MPTGAGKS. The DEAH box signature appears at 157–160; sequence DEAH. In terms of domain architecture, Helicase C-terminal spans 241-398; it reads NLRDFCLKAL…NKPSDKATLL (158 aa). C412, C428, C432, and C435 together coordinate Zn(2+). 2 positions are modified to phosphoserine: S489 and S492. The tract at residues 491–621 is interaction with POLR2A; the sequence is GSGDEGRDEA…ASKDGQLYDM (131 aa). 3 disordered regions span residues 518–538, 679–795, and 822–884; these read GKEA…LRDA, TEKL…VPGK, and CSLE…AREP. A Phosphothreonine modification is found at T527. An interaction with RAD51 region spans residues 653–726; that stretch reads PKRVGAGFSK…APGSRTNCGD (74 aa). S728 carries the phosphoserine; by CDK1 modification. Over residues 840–856 the composition is skewed to basic and acidic residues; that stretch reads TQAEKRPRPQQESQEKR. Over residues 863–878 the composition is skewed to polar residues; that stretch reads PSTNSSALASDPSTEN.

Belongs to the helicase family. RecQ subfamily. Monomer. Interacts with TOP2A, TOP3A and TOP3B. Interacts with RNA polymerase II subunit POLR2A. Identified in a complex with the RNA polymerase II core bound to DNA. Interacts with RAD51. Interacts with WRN; this interaction stimulates WRN helicase activity on DNA fork duplexes. Interacts with MUS1; this interaction promotes MUS81-dependent mitotic DNA synthesis. Requires Zn(2+) as cofactor. In terms of processing, phosphorylated by CDK1 at Ser-728; this phosphorylation is required for RECQL5-mediated disruption of RAD51 filaments on stalled replication forks.

The protein resides in the nucleus. The protein localises to the nucleoplasm. It carries out the reaction Couples ATP hydrolysis with the unwinding of duplex DNA by translocating in the 3'-5' direction.. The catalysed reaction is ATP + H2O = ADP + phosphate + H(+). Its function is as follows. DNA helicase that plays an important role in DNA replication, transcription and repair. Binds to the RNA polymerase II subunit POLR2A during transcription elongation and suppresses transcription-associated genomic instability. Also associates with POLR1A and enforces the stability of ribosomal DNA arrays. Plays an important role in mitotic chromosome separation after cross-over events and cell cycle progress. Mechanistically, removes RAD51 filaments protecting stalled replication forks at common fragile sites and stimulates MUS81-EME1 endonuclease leading to mitotic DNA synthesis. Required for efficient DNA repair, including repair of inter-strand cross-links. Stimulates DNA decatenation mediated by TOP2A. Prevents sister chromatid exchange and homologous recombination. The sequence is that of ATP-dependent DNA helicase Q5 (Recql5) from Rattus norvegicus (Rat).